Reading from the N-terminus, the 145-residue chain is D-aminoacyl-tRNA deacylase (145 aa).

Residues 137–138 carry the Gly-cisPro motif, important for rejection of L-amino acids motif; that stretch reads GP.

It belongs to the DTD family. In terms of assembly, homodimer.

It is found in the cytoplasm. It carries out the reaction glycyl-tRNA(Ala) + H2O = tRNA(Ala) + glycine + H(+). The catalysed reaction is a D-aminoacyl-tRNA + H2O = a tRNA + a D-alpha-amino acid + H(+). Functionally, an aminoacyl-tRNA editing enzyme that deacylates mischarged D-aminoacyl-tRNAs. Also deacylates mischarged glycyl-tRNA(Ala), protecting cells against glycine mischarging by AlaRS. Acts via tRNA-based rather than protein-based catalysis; rejects L-amino acids rather than detecting D-amino acids in the active site. By recycling D-aminoacyl-tRNA to D-amino acids and free tRNA molecules, this enzyme counteracts the toxicity associated with the formation of D-aminoacyl-tRNA entities in vivo and helps enforce protein L-homochirality. This is D-aminoacyl-tRNA deacylase from Pseudomonas syringae pv. tomato (strain ATCC BAA-871 / DC3000).